A 424-amino-acid chain; its full sequence is Putative polyketide beta-ketoacyl synthase 2 (424 aa).

The region spanning 13-416 is the Ketosynthase family 3 (KS3) domain; it reads SRRAVVTGLG…GSNSALVLRR (404 aa).

Belongs to the thiolase-like superfamily. Beta-ketoacyl-ACP synthases family.

Involved in developmentally regulated synthesis of a compound biosynthetically related to polyketide antibiotics which is essential for spore color in Streptomyces coelicolor. The protein is Putative polyketide beta-ketoacyl synthase 2 of Streptomyces coelicolor (strain ATCC BAA-471 / A3(2) / M145).